Consider the following 422-residue polypeptide: Metallocarboxypeptidase A (422 aa).

The signal sequence occupies residues 1-17 (MRSVLSLALLAANVVTA). A propeptide spans 18-112 (AVVSPFDYSG…FEAYSAGYAP (95 aa)) (activation peptide). Residues 119 to 419 (SYHSYQDHLS…AGTVAMLKAV (301 aa)) form the Peptidase M14 domain. Residues H179 and E182 each contribute to the Zn(2+) site. Residues 179–182 (HARE), R237, and 254–255 (NR) each bind substrate. A disulfide bridge links C248 with C271. H309 provides a ligand contact to Zn(2+). 310-311 (SY) serves as a coordination point for substrate. Residue E385 is the Proton donor/acceptor of the active site.

It belongs to the peptidase M14 family. It depends on Zn(2+) as a cofactor.

It localises to the secreted. Its function is as follows. Extracellular metalloprotease that contributes to pathogenicity. In Trichophyton rubrum (Athlete's foot fungus), this protein is Metallocarboxypeptidase A (MCPA).